The following is a 273-amino-acid chain: Formamidopyrimidine-DNA glycosylase (273 aa).

The Schiff-base intermediate with DNA role is filled by P2. E3 acts as the Proton donor in catalysis. K58 (proton donor; for beta-elimination activity) is an active-site residue. 3 residues coordinate DNA: H92, R111, and K153. Residues 238–272 (KVYGREGQSCLSCSSTIIKIKHSGRSTFYCKTCQY) form an FPG-type zinc finger. R262 (proton donor; for delta-elimination activity) is an active-site residue.

It belongs to the FPG family. Monomer. The cofactor is Zn(2+).

It catalyses the reaction Hydrolysis of DNA containing ring-opened 7-methylguanine residues, releasing 2,6-diamino-4-hydroxy-5-(N-methyl)formamidopyrimidine.. It carries out the reaction 2'-deoxyribonucleotide-(2'-deoxyribose 5'-phosphate)-2'-deoxyribonucleotide-DNA = a 3'-end 2'-deoxyribonucleotide-(2,3-dehydro-2,3-deoxyribose 5'-phosphate)-DNA + a 5'-end 5'-phospho-2'-deoxyribonucleoside-DNA + H(+). Involved in base excision repair of DNA damaged by oxidation or by mutagenic agents. Acts as a DNA glycosylase that recognizes and removes damaged bases. Has a preference for oxidized purines, such as 7,8-dihydro-8-oxoguanine (8-oxoG). Has AP (apurinic/apyrimidinic) lyase activity and introduces nicks in the DNA strand. Cleaves the DNA backbone by beta-delta elimination to generate a single-strand break at the site of the removed base with both 3'- and 5'-phosphates. In Rickettsia africae (strain ESF-5), this protein is Formamidopyrimidine-DNA glycosylase.